Here is a 636-residue protein sequence, read N- to C-terminus: Zinc finger protein 90 (636 aa).

A KRAB domain is found at 14 to 85 (VTFKDVAVNF…EKEIQRPFCP (72 aa)). C2H2-type zinc fingers lie at residues 208-230 (YKCDKCRKSFIHRSSLNKHEKIH), 250-272 (HECADCGKTFLWRTQLTEHQRIH), 278-300 (FECNVCGKAFRHSSSLGQHENAH), 306-328 (YQCSLCGKAFQRSSSLVQHQRIH), 334-356 (YRCNLCGRSFRHSTSLTQHEVTH), 362-384 (FQCKECGKAFSRCSSLVQHERTH), and 390-412 (FECSICGRAFGQSPSLYKHMRIH). A disordered region spans residues 227–247 (EKIHKGDPYSNGTDQGAQSGR). Residue lysine 444 forms a Glycyl lysine isopeptide (Lys-Gly) (interchain with G-Cter in SUMO2) linkage. 6 consecutive C2H2-type zinc fingers follow at residues 446-468 (YHCNDCGKDFGHITDFSEHQRLH), 494-516 (YQCNVCGKAFKRSTSFIEHHRIH), 522-544 (YECNECGEAFSRLSSLTQHERTH), 550-572 (YECIDCGKAFSQSSSLIQHERTH), 578-600 (YECNECGRAFRKKTNLHDHQRTH), and 606-628 (YACKECGRNFSRSSALTKHHRVH).

This sequence belongs to the krueppel C2H2-type zinc-finger protein family. In terms of assembly, interacts (via N- and C-termini) with REST (via zinc-finger DNA-binding domain); the interaction inhibits REST repressor activity. As to expression, brain, spleen, thymus, and testis. Expressed in heart.

The protein localises to the nucleus. Inhibits the transcriptional repressor activity of REST by inhibiting its binding to DNA, thereby derepressing transcription of REST target genes. The sequence is that of Zinc finger protein 90 (Zfp90) from Mus musculus (Mouse).